Here is a 305-residue protein sequence, read N- to C-terminus: Ribonuclease BN (305 aa).

7 residues coordinate Zn(2+): His-64, His-66, Asp-68, His-69, His-141, Asp-212, and His-270. Asp-68 (proton acceptor) is an active-site residue.

This sequence belongs to the RNase Z family. RNase BN subfamily. As to quaternary structure, homodimer. Requires Zn(2+) as cofactor.

In terms of biological role, zinc phosphodiesterase, which has both exoribonuclease and endoribonuclease activities. The sequence is that of Ribonuclease BN from Escherichia coli O81 (strain ED1a).